The sequence spans 413 residues: Tyrosine--tRNA ligase (413 aa).

The 'HIGH' region signature appears at 57–66; the sequence is PTAPDIHLGH. The 'KMSKS' region motif lies at 241–245; the sequence is KMSKS. Residue lysine 244 coordinates ATP. Positions 351–412 constitute an S4 RNA-binding domain; the sequence is VWLPRLMVQA…GKRKFARLHT (62 aa).

This sequence belongs to the class-I aminoacyl-tRNA synthetase family. TyrS type 2 subfamily. Homodimer.

It localises to the cytoplasm. The enzyme catalyses tRNA(Tyr) + L-tyrosine + ATP = L-tyrosyl-tRNA(Tyr) + AMP + diphosphate + H(+). Its function is as follows. Catalyzes the attachment of tyrosine to tRNA(Tyr) in a two-step reaction: tyrosine is first activated by ATP to form Tyr-AMP and then transferred to the acceptor end of tRNA(Tyr). The protein is Tyrosine--tRNA ligase of Moorella thermoacetica (strain ATCC 39073 / JCM 9320).